Consider the following 274-residue polypeptide: Pyrogallol hydroxytransferase small subunit (274 aa).

Residues Cys-13, Cys-16, Cys-19, Cys-23, Cys-68, Cys-71, Cys-76, Cys-109, Cys-126, Cys-129, Cys-145, and Cys-149 each coordinate [4Fe-4S] cluster.

As to quaternary structure, heterodimer of a large and a small subunit. Requires [4Fe-4S] cluster as cofactor.

It carries out the reaction 1,2,3,5-tetrahydroxybenzene + 1,2,3-trihydroxybenzene = 1,2,3,5-tetrahydroxybenzene + 1,3,5-trihydroxybenzene. Isomerization of pyrogallol to phloroglucin. The sequence is that of Pyrogallol hydroxytransferase small subunit (bthL) from Pelobacter acidigallici.